The chain runs to 192 residues: NF-kappa-B inhibitor-interacting Ras-like protein 1 (192 aa).

Residues 1-192 (MGKGCKVVVC…KSKGTPSNDI (192 aa)) form a small GTPase-like region. GTP is bound at residue 11 to 18 (GMASVGKT). The Effector region motif lies at 35–43 (TSDTQEDIY). Residues 61 to 65 (DTRGL) and 120 to 123 (NKCE) each bind GTP. Residues 169–192 (TQPQSKSAFPLPGRKSKGTPSNDI) form a disordered region.

It belongs to the small GTPase superfamily. Ras family. KappaB-Ras subfamily.

It is found in the cytoplasm. Its function is as follows. Atypical Ras-like protein that acts as a potent regulator of NF-kappa-B activity by preventing the degradation of NF-kappa-B inhibitor beta (NFKBIB) by most signals, explaining why NFKBIB is more resistant to degradation. This chain is NF-kappa-B inhibitor-interacting Ras-like protein 1 (nkiras1), found in Danio rerio (Zebrafish).